Reading from the N-terminus, the 486-residue chain is ATP synthase subunit beta (486 aa).

Residue 164-171 (GGAGVGKT) coordinates ATP.

This sequence belongs to the ATPase alpha/beta chains family. As to quaternary structure, F-type ATPases have 2 components, CF(1) - the catalytic core - and CF(0) - the membrane proton channel. CF(1) has five subunits: alpha(3), beta(3), gamma(1), delta(1), epsilon(1). CF(0) has four main subunits: a(1), b(1), b'(1) and c(9-12).

The protein resides in the cellular thylakoid membrane. It catalyses the reaction ATP + H2O + 4 H(+)(in) = ADP + phosphate + 5 H(+)(out). In terms of biological role, produces ATP from ADP in the presence of a proton gradient across the membrane. The catalytic sites are hosted primarily by the beta subunits. This Prochlorococcus marinus (strain MIT 9515) protein is ATP synthase subunit beta.